The primary structure comprises 327 residues: Protoheme IX farnesyltransferase (327 aa).

Helical transmembrane passes span 55-75 (LVCT…LNCL), 101-121 (AAFV…VSGV), 124-144 (LAAG…TALL), 152-172 (IVVG…AATG), 180-200 (WLFA…ALLL), 237-257 (FLGI…ILPF), and 278-298 (AKGL…LLVM).

It belongs to the UbiA prenyltransferase family. Protoheme IX farnesyltransferase subfamily.

The protein resides in the cell inner membrane. It catalyses the reaction heme b + (2E,6E)-farnesyl diphosphate + H2O = Fe(II)-heme o + diphosphate. Its pathway is porphyrin-containing compound metabolism; heme O biosynthesis; heme O from protoheme: step 1/1. Its function is as follows. Converts heme B (protoheme IX) to heme O by substitution of the vinyl group on carbon 2 of heme B porphyrin ring with a hydroxyethyl farnesyl side group. This Synechococcus sp. (strain CC9311) protein is Protoheme IX farnesyltransferase.